Consider the following 353-residue polypeptide: Photosystem II protein D1 (353 aa).

Thr2 is modified (N-acetylthreonine). Phosphothreonine is present on Thr2. 3 helical membrane passes run 29-46, 118-133, and 142-156; these read YIGW…TATS, HFLL…EWEL, and WIAV…AATA. Position 118 (His118) interacts with chlorophyll a. Tyr126 contacts pheophytin a. [CaMn4O5] cluster is bound by residues Asp170 and Glu189. The helical transmembrane segment at 197 to 218 threads the bilayer; it reads FHMLGVAGVFGGSLFSAMHGSL. Chlorophyll a is bound at residue His198. Residues His215 and 264–265 contribute to the a quinone site; that span reads SF. His215 lines the Fe cation pocket. His272 contributes to the Fe cation binding site. A helical membrane pass occupies residues 274-288; that stretch reads FLAAWPVVGIWFTAL. Residues His332, Glu333, Asp342, and Ala344 each contribute to the [CaMn4O5] cluster site. A propeptide spanning residues 345–353 is cleaved from the precursor; it reads AVEAPAVNG.

The protein belongs to the reaction center PufL/M/PsbA/D family. In terms of assembly, PSII is composed of 1 copy each of membrane proteins PsbA, PsbB, PsbC, PsbD, PsbE, PsbF, PsbH, PsbI, PsbJ, PsbK, PsbL, PsbM, PsbT, PsbX, PsbY, PsbZ, Psb30/Ycf12, at least 3 peripheral proteins of the oxygen-evolving complex and a large number of cofactors. It forms dimeric complexes. The D1/D2 heterodimer binds P680, chlorophylls that are the primary electron donor of PSII, and subsequent electron acceptors. It shares a non-heme iron and each subunit binds pheophytin, quinone, additional chlorophylls, carotenoids and lipids. D1 provides most of the ligands for the Mn4-Ca-O5 cluster of the oxygen-evolving complex (OEC). There is also a Cl(-1) ion associated with D1 and D2, which is required for oxygen evolution. The PSII complex binds additional chlorophylls, carotenoids and specific lipids. is required as a cofactor. Tyr-161 forms a radical intermediate that is referred to as redox-active TyrZ, YZ or Y-Z. Post-translationally, C-terminally processed by CTPA; processing is essential to allow assembly of the oxygen-evolving complex and thus photosynthetic growth.

The protein localises to the plastid. The protein resides in the chloroplast thylakoid membrane. The enzyme catalyses 2 a plastoquinone + 4 hnu + 2 H2O = 2 a plastoquinol + O2. In terms of biological role, photosystem II (PSII) is a light-driven water:plastoquinone oxidoreductase that uses light energy to abstract electrons from H(2)O, generating O(2) and a proton gradient subsequently used for ATP formation. It consists of a core antenna complex that captures photons, and an electron transfer chain that converts photonic excitation into a charge separation. The D1/D2 (PsbA/PsbD) reaction center heterodimer binds P680, the primary electron donor of PSII as well as several subsequent electron acceptors. The sequence is that of Photosystem II protein D1 from Conocephalum conicum (Snakeskin liverwort).